Consider the following 586-residue polypeptide: A-type ATP synthase subunit A (586 aa).

232–239 is an ATP binding site; the sequence is GPFGSGKT.

This sequence belongs to the ATPase alpha/beta chains family. As to quaternary structure, has multiple subunits with at least A(3), B(3), C, D, E, F, H, I and proteolipid K(x).

The protein resides in the cell membrane. It catalyses the reaction ATP + H2O + 4 H(+)(in) = ADP + phosphate + 5 H(+)(out). In terms of biological role, component of the A-type ATP synthase that produces ATP from ADP in the presence of a proton gradient across the membrane. The A chain is the catalytic subunit. This Methanococcus maripaludis (strain C7 / ATCC BAA-1331) protein is A-type ATP synthase subunit A.